We begin with the raw amino-acid sequence, 60 residues long: Large ribosomal subunit protein bL32 (60 aa).

This sequence belongs to the bacterial ribosomal protein bL32 family.

The protein is Large ribosomal subunit protein bL32 of Streptococcus mutans serotype c (strain ATCC 700610 / UA159).